Here is a 179-residue protein sequence, read N- to C-terminus: Interferon lambda-4 (179 aa).

The first 21 residues, 1–21 (MRPSVWAAVAAGLWVLCTVIA), serve as a signal peptide directing secretion. The interval 130–149 (SSRKVPGAQKRRHKPRRADS) is disordered.

It belongs to the lambda interferon family.

Its subcellular location is the cytoplasm. The protein resides in the secreted. In terms of biological role, cytokine that may trigger an antiviral response activating the JAK-STAT pathway and up-regulating specifically some interferon-stimulated genes. The chain is Interferon lambda-4 (IFNL4) from Homo sapiens (Human).